Reading from the N-terminus, the 28-residue chain is ASDVTLNSFAEDVTVGECCDCVDLTTVY.

It belongs to the venom metalloproteinase (M12B) family. Zn(2+) is required as a cofactor. As to expression, expressed by the venom gland.

It localises to the secreted. The sequence is that of 50 kDa venom protease from Proatheris superciliaris (Lowland swamp viper).